A 256-amino-acid polypeptide reads, in one-letter code: Undecaprenyl-diphosphatase (256 aa).

A run of 8 helical transmembrane segments spans residues methionine 1 to isoleucine 21, asparagine 39 to phenylalanine 59, isoleucine 70 to phenylalanine 90, leucine 97 to valine 117, alanine 134 to glycine 154, alanine 176 to leucine 196, alanine 205 to isoleucine 225, and phenylalanine 235 to phenylalanine 255.

It belongs to the UppP family.

It localises to the cell inner membrane. The enzyme catalyses di-trans,octa-cis-undecaprenyl diphosphate + H2O = di-trans,octa-cis-undecaprenyl phosphate + phosphate + H(+). In terms of biological role, catalyzes the dephosphorylation of undecaprenyl diphosphate (UPP). Confers resistance to bacitracin. This chain is Undecaprenyl-diphosphatase, found in Sulfurimonas denitrificans (strain ATCC 33889 / DSM 1251) (Thiomicrospira denitrificans (strain ATCC 33889 / DSM 1251)).